Here is a 361-residue protein sequence, read N- to C-terminus: DNA-(apurinic or apyrimidinic site) endonuclease (361 aa).

The interval 1 to 90 (MTSRTKKLKM…TNKTTASVSI (90 aa)) is disordered. Positions 25–39 (TSEEEKEEVEEEEEE) are enriched in acidic residues. The short motif at 41-44 (KKRK) is the Nuclear localization signal element. The segment covering 43 to 64 (RKLVKKTPAKKAPAKKAAAKKK) has biased composition (basic residues). Residues 68–80 (EDEDEEEKEEEEE) are compositionally biased toward acidic residues. Residue E139 coordinates Mg(2+). Residue Y211 is part of the active site. Mg(2+) is bound by residues D252, N254, and D350. Catalysis depends on D252, which acts as the Proton donor/acceptor.

This sequence belongs to the DNA repair enzymes AP/ExoA family. Mg(2+) is required as a cofactor. It depends on Mn(2+) as a cofactor.

Its subcellular location is the nucleus. The protein is DNA-(apurinic or apyrimidinic site) endonuclease (apeA) of Dictyostelium discoideum (Social amoeba).